The following is a 654-amino-acid chain: Kelch-like protein 13 (654 aa).

The BTB domain occupies 91–160 (CDVTLMPGDT…IYTAKLSLNM (70 aa)). Positions 195-296 (CVEVGRIANT…TPQELINYVQ (102 aa)) constitute a BACK domain. Kelch repeat units follow at residues 340-388 (RLVT…VIGN), 389-440 (FLYV…ALKG), 441-487 (FLYA…VYGG), 489-534 (MYIS…TVGD), 536-586 (LYVI…VFEN), and 587-635 (KIYV…TLTV).

In terms of assembly, component of the BCR(KLHL9-KLHL13) E3 ubiquitin ligase complex, at least composed of CUL3, KLHL9, KLHL13 and RBX1. Interacts with AURKB.

It functions in the pathway protein modification; protein ubiquitination. Its function is as follows. Substrate-specific adapter of a BCR (BTB-CUL3-RBX1) E3 ubiquitin-protein ligase complex required for mitotic progression and cytokinesis. The BCR(KLHL9-KLHL13) E3 ubiquitin ligase complex mediates the ubiquitination of AURKB and controls the dynamic behavior of AURKB on mitotic chromosomes and thereby coordinates faithful mitotic progression and completion of cytokinesis. The sequence is that of Kelch-like protein 13 (Klhl13) from Mus musculus (Mouse).